The chain runs to 296 residues: Aquaporin PIP1-6 (296 aa).

The next 2 membrane-spanning stretches (helical) occupy residues 63–83 and 98–120; these read IAEFVATFLFLYVTVLTVMGV and IAWAFGGMIFALVYCTAGVSGGH. Positions 122–124 match the NPA 1 motif; it reads NPA. A run of 3 helical transmembrane segments spans residues 141–161, 183–203, and 217–237; these read VYYVVMQCLGAVCGAGVVKAF, GDGLGAEVVGTFVLVYTVFSA, and ALAPLPIGFAVFLVHLATIPI. The short motif at 243–245 is the NPA 2 element; that stretch reads NPA. A helical membrane pass occupies residues 265-285; sequence IFWVGPFAGAALAAVYHQVVL.

The protein belongs to the MIP/aquaporin (TC 1.A.8) family. PIP (TC 1.A.8.11) subfamily.

It is found in the cell membrane. Its function is as follows. Aquaporins facilitate the transport of water and small neutral solutes across cell membranes. The protein is Aquaporin PIP1-6 (PIP1-6) of Zea mays (Maize).